We begin with the raw amino-acid sequence, 208 residues long: RNA chaperone ProQ (208 aa).

The segment covering 106 to 127 has biased composition (basic and acidic residues); it reads SKAKVATRRKEQAKKAREEAKA. Residues 106 to 154 are disordered; the sequence is SKAKVATRRKEQAKKAREEAKAKKTARAATPPKRRPQPAAKKVEQPVET.

The protein belongs to the ProQ family.

It is found in the cytoplasm. RNA chaperone with significant RNA binding, RNA strand exchange and RNA duplexing activities. The chain is RNA chaperone ProQ from Aliivibrio fischeri (strain ATCC 700601 / ES114) (Vibrio fischeri).